Consider the following 4303-residue polypeptide: Polycystin-1 (4303 aa).

A signal peptide spans 1–23 (MPPAAPARLALALGLGLWLGALA). The LRRNT domain occupies 24–67 (GGPGRGCGPCEPPCLCGPAPGAACRVNCSGRGLRTLGPALRIPA). Residues 24–3074 (GGPGRGCGPC…VFPEPTADVN (3051 aa)) are Extracellular-facing. Residues N50 and N89 are each glycosylated (N-linked (GlcNAc...) asparagine). LRR repeat units follow at residues 68–91 (DATA…ANLS) and 92–113 (ALAE…IFAN). Residues N116 and N121 are each glycosylated (N-linked (GlcNAc...) asparagine). Positions 125–178 (NPFECDCGLAWLPRWAEEQQVRVVQPEAATCAGPGSLAGQPLLGIPLLDSGCGE) constitute an LRRCT domain. A WSC domain is found at 177–271 (GEEYVACLPD…PTLLQHVFPA (95 aa)). N187 carries N-linked (GlcNAc...) asparagine glycosylation. Residues 272-359 (SPGATLVGPH…VQVEAAPAAL (88 aa)) form the PKD 1 domain. A C-type lectin domain is found at 415 to 531 (GNGHCYRLVV…CSAPHSYVCE (117 aa)). 2 disulfides stabilise this stretch: C436–C530 and C508–C522. A disordered region spans residues 616-635 (AGTPENGSEPESRSPDNRTQ). Residues N621 and N632 are each glycosylated (N-linked (GlcNAc...) asparagine). One can recognise an LDL-receptor class A; atypical domain in the interval 638-671 (PACMPGGRWCPGANICLPLDASCHPQACANGCTS). Cystine bridges form between C640–C653, C647–C665, and C660–C669. The 75-residue stretch at 743 to 817 (LSANASSWLP…RHNLSCSFDV (75 aa)) folds into the PKD 2 domain. 32 N-linked (GlcNAc...) asparagine glycosylation sites follow: N746, N810, N841, N854, N890, N921, N1004, N1010, N1034, N1072, N1113, N1178, N1194, N1240, N1269, N1336, N1348, N1382, N1450, N1455, N1474, N1518, N1541, N1554, N1563, N1647, N1661, N1733, N1791, N1834, N1867, and N1880. PKD domains are found at residues 855–928 (ATAT…RVTA), 935–1020 (LRAT…NRMQ), 1023–1129 (QVST…LPSV), 1127–1215 (PSVA…LRGL), 1213–1298 (RGLS…EVLR), 1294–1383 (LEVL…VGNV), 1382–1469 (NVTL…VLVT), 1468–1551 (VTSI…VRGL), 1550–1635 (GLVV…IEGL), 1634–1721 (GLQV…VGWL), 1719–1805 (GWLM…VSGL), 1807–1890 (IRAS…IVGL), 1889–1974 (GLVL…VSGL), 1977–2057 (PNCC…VLEV), and 2060–2148 (AVQY…ACRE). N1991, N2050, N2074, N2125, N2248, N2353, N2395, N2412, N2567, N2578, N2645, N2718, N2754, N2841, N2878, N2925, N2956, and N2994 each carry an N-linked (GlcNAc...) asparagine glycan. The 688-residue stretch at 2146–2833 (CREPEVDVVL…QLIFLVDSNP (688 aa)) folds into the REJ domain. The 202-residue stretch at 2862 to 3063 (PIERLASERA…SLFVPPSHVR (202 aa)) folds into the GAIN-B domain. C3015 and C3043 are disulfide-bonded. A GPS region spans residues 3015-3063 (CQYFSEEDMVWRTEGLLPLEETSPRQAVCLTRHLTAFGASLFVPPSHVR). The chain crosses the membrane as a helical span at residues 3075-3095 (YIVMLTCAVCLVTYMVMAAIL). Residues 3096-3277 (HKLDQLDASR…DRPPRSRFTR (182 aa)) are Cytoplasmic-facing. One can recognise a PLAT domain in the interval 3118 to 3233 (FKYEILVKTG…EANGGLVEKE (116 aa)). The chain crosses the membrane as a helical span at residues 3278 to 3298 (IQRATCCVLLICLFLGANAVW). At 3299–3323 (YGAVGDSAYSTGHVSRLSPLSVDTV) the chain is on the extracellular side. The chain crosses the membrane as a helical span at residues 3324–3344 (AVGLVSSVVVYPVYLAILFLF). The Cytoplasmic portion of the chain corresponds to 3345–3559 (RMSRSKVAGS…LPAWCASLAH (215 aa)). A helical membrane pass occupies residues 3560–3580 (GLSLLLVAVAVAVSGWVGASF). Residues 3581 to 3582 (PP) lie on the Extracellular side of the membrane. Residues 3583–3603 (GVSVAWLLSSSASFLASFLGW) traverse the membrane as a helical segment. The Cytoplasmic portion of the chain corresponds to 3604–3665 (EPLKVLLEAL…LAKEEARKVK (62 aa)). Residues 3666 to 3686 (RLHGMLRSLLVYMLFLLVTLL) form a helical membrane-spanning segment. Residues 3687–3901 (ASYGDASCHG…RLSAGLSLPL (215 aa)) lie on the Extracellular side of the membrane. N-linked (GlcNAc...) asparagine glycosylation is found at N3738, N3790, and N3845. A helical membrane pass occupies residues 3902-3922 (LTSVCLLLFAVHFAVAEARTW). Residues 3923–3935 (HREGRWRVLRLGA) lie on the Cytoplasmic side of the membrane. The helical transmembrane segment at 3936 to 3956 (WARWLLVALTAATALVRLAQL) threads the bilayer. Residues 3957–3984 (GAADRQWTRFVRGRPRRFTSFDQVAQLS) are Extracellular-facing. A helical membrane pass occupies residues 3985–4005 (SAARGLAASLLFLLLVKAAQQ). Residues 4006 to 4027 (LRFVRQWSVFGKTLCRALPELL) lie on the Cytoplasmic side of the membrane. Residues 4028–4048 (GVTLGLVVLGVAYAQLAILLV) form a helical membrane-spanning segment. The Extracellular portion of the chain corresponds to 4049–4090 (SSCVDSLWSVAQALLVLCPGTGLSTLCPAESWHLSPLLCVGL). The helical transmembrane segment at 4091–4110 (WALRLWGALRLGAVILRWRY) threads the bilayer. Residues 4111–4303 (HALRGELYRP…AKNKVHPSST (193 aa)) are Cytoplasmic-facing. Disordered stretches follow at residues 4160–4196 (PLPS…QLDG) and 4243–4303 (LHSL…PSST). The residue at position 4166 (S4166) is a Phosphoserine; by PRKX; in vitro. A compositionally biased stretch (polar residues) spans 4185 to 4195 (SHPSTSSSQLD). Residues 4220–4251 (EALLTQFDRLNQATEDVYQLEQQLHSLQGRRS) are a coiled coil. Residues 4253–4269 (RAPAGSSRGPSPGLRPA) are compositionally biased toward low complexity. Positions 4292 to 4303 (LRAKNKVHPSST) are enriched in basic residues.

The protein belongs to the polycystin family. Component of the heterotetrameric polycystin channel complex with PKD2; the tetramer contains one PKD1 chain and three PKD2 chains. Interacts with PKD2; the interaction is required for ciliary localization. Interacts with PKD2L1. Interacts with PRKX; involved in differentiation and controlled morphogenesis of the kidney. Interacts (via extracellular domain) with WNT3A, WNT4, WNT5A and WNT9B. Interacts with DVL1 and DVL2. Interacts with NPHP1 (via SH3 domain). Interacts with BBS1, BBS4, BBS5 and TTC8. Interacts with RGS7. Interacts (via the PKD repeats in the N-terminal extracellular region) with EPCIP; the interaction is not dependent on N-glycosylation of either protein. In terms of processing, N-glycosylated. Post-translationally, after synthesis, undergoes cleavage between Leu-3048 and Thr-3049 in the GPS region of the GAIN-B domain. Cleavage at the GPS region occurs through a cis-autoproteolytic mechanism involving an ester-intermediate via N-O acyl rearrangement. This process takes place in the early secretory pathway, depends on initial N-glycosylation, and requires the REJ domain. There is evidence that cleavage at GPS region is incomplete. Uncleaved and cleaved products may have different functions in vivo.

It localises to the cell membrane. It is found in the cell projection. The protein localises to the cilium. The protein resides in the endoplasmic reticulum. Its subcellular location is the golgi apparatus. It localises to the vesicle. It is found in the secreted. The protein localises to the extracellular exosome. In terms of biological role, component of a heteromeric calcium-permeable ion channel formed by PKD1 and PKD2 that is activated by interaction between PKD1 and a Wnt family member, such as WNT3A and WNT9B. Both PKD1 and PKD2 are required for channel activity. Involved in renal tubulogenesis. Involved in fluid-flow mechanosensation by the primary cilium in renal epithelium. Acts as a regulator of cilium length, together with PKD2. The dynamic control of cilium length is essential in the regulation of mechanotransductive signaling. The cilium length response creates a negative feedback loop whereby fluid shear-mediated deflection of the primary cilium, which decreases intracellular cAMP, leads to cilium shortening and thus decreases flow-induced signaling. May be an ion-channel regulator. Involved in adhesive protein-protein and protein-carbohydrate interactions. Likely to be involved with polycystin-1-interacting protein 1 in the detection, sequestration and exocytosis of senescent mitochondria. The protein is Polycystin-1 of Homo sapiens (Human).